The following is a 147-amino-acid chain: D-aminoacyl-tRNA deacylase (147 aa).

Residues 136–137 (GP) carry the Gly-cisPro motif, important for rejection of L-amino acids motif.

The protein belongs to the DTD family. As to quaternary structure, homodimer.

The protein localises to the cytoplasm. The catalysed reaction is glycyl-tRNA(Ala) + H2O = tRNA(Ala) + glycine + H(+). The enzyme catalyses a D-aminoacyl-tRNA + H2O = a tRNA + a D-alpha-amino acid + H(+). An aminoacyl-tRNA editing enzyme that deacylates mischarged D-aminoacyl-tRNAs. Also deacylates mischarged glycyl-tRNA(Ala), protecting cells against glycine mischarging by AlaRS. Acts via tRNA-based rather than protein-based catalysis; rejects L-amino acids rather than detecting D-amino acids in the active site. By recycling D-aminoacyl-tRNA to D-amino acids and free tRNA molecules, this enzyme counteracts the toxicity associated with the formation of D-aminoacyl-tRNA entities in vivo and helps enforce protein L-homochirality. The protein is D-aminoacyl-tRNA deacylase of Streptococcus thermophilus (strain CNRZ 1066).